The following is a 345-amino-acid chain: S-adenosylmethionine:tRNA ribosyltransferase-isomerase (345 aa).

It belongs to the QueA family. As to quaternary structure, monomer.

It is found in the cytoplasm. The enzyme catalyses 7-aminomethyl-7-carbaguanosine(34) in tRNA + S-adenosyl-L-methionine = epoxyqueuosine(34) in tRNA + adenine + L-methionine + 2 H(+). Its pathway is tRNA modification; tRNA-queuosine biosynthesis. Functionally, transfers and isomerizes the ribose moiety from AdoMet to the 7-aminomethyl group of 7-deazaguanine (preQ1-tRNA) to give epoxyqueuosine (oQ-tRNA). The chain is S-adenosylmethionine:tRNA ribosyltransferase-isomerase from Acidithiobacillus ferrooxidans (strain ATCC 53993 / BNL-5-31) (Leptospirillum ferrooxidans (ATCC 53993)).